A 718-amino-acid chain; its full sequence is MFNKHSVEIDWGGRPLKLETGKVARQADGAVVATYGETIVLATVVAAKTPREGVDFLPLTVDYQEKTYAAGRIPGGYFKREGRPTEKETLVSRLIDRPIRPLFADGWRNETQVIVTVLSHDMENDPDILAMVAASAALTLSGAPFKGPIGAARVGFINDEYVLNPVLDEMPETQLELVVAGTADAVLMVESEAKELSEEIMLGAVMFGHRHFQPVIDAIIELAEKAAKEPRELVVIDDSAIEKEMLGLVEQELRAAYAIPVKQERYAAVGKVKEKAIAHFFPEGEEPKYDKLRIAGVFKELEAKIVRWNILDTGKRIDGRDSKTVRSIIAEAGVLPRAHGSALFTRGETQALVVTTLGTGEDEQYVDSLAGTYKETFLLHYNFPPYSVGETGRLGGTKRREIGHGKLAWRAIRPVLPPHHEFPYTIRVVSEITESNGSSSMASVCGASLALMDAGVPLKRPTAGIAMGLILEGERFAVLSDILGDEDHLGDMDFKVAGTEQGITSLQMDIKIAGITEEIMKVALGQAKDGRIHILGEMSKALDRARAELGEHAPRIETFKIPTDKIREVIGTGGKVIREIVEKTGAKVNIEDDGTVKVASSDGESIKAAIKWIKSIASDPEVGEIYEGTVVKVMEFGAFVNFFGAKDGLVHISQLASGRVQKTSDVVKEGDKVKVKLLGFDDRGKTRLSMRVVDQETGEDLEAKQKAEGEAPAQATGE.

The Mg(2+) site is built by Asp-487 and Asp-493. Residues Pro-554–Ile-613 enclose the KH domain. The region spanning Gly-623 to Arg-691 is the S1 motif domain. The interval Asp-694–Glu-718 is disordered.

This sequence belongs to the polyribonucleotide nucleotidyltransferase family. It depends on Mg(2+) as a cofactor.

It localises to the cytoplasm. It carries out the reaction RNA(n+1) + phosphate = RNA(n) + a ribonucleoside 5'-diphosphate. Functionally, involved in mRNA degradation. Catalyzes the phosphorolysis of single-stranded polyribonucleotides processively in the 3'- to 5'-direction. This chain is Polyribonucleotide nucleotidyltransferase, found in Rhodopseudomonas palustris (strain HaA2).